A 269-amino-acid polypeptide reads, in one-letter code: Thiazole synthase (269 aa).

Lys-112 serves as the catalytic Schiff-base intermediate with DXP. Residues Gly-173, 199 to 200, and 221 to 222 contribute to the 1-deoxy-D-xylulose 5-phosphate site; these read AG and NT.

Belongs to the ThiG family. In terms of assembly, homotetramer. Forms heterodimers with either ThiH or ThiS.

The protein localises to the cytoplasm. It carries out the reaction [ThiS sulfur-carrier protein]-C-terminal-Gly-aminoethanethioate + 2-iminoacetate + 1-deoxy-D-xylulose 5-phosphate = [ThiS sulfur-carrier protein]-C-terminal Gly-Gly + 2-[(2R,5Z)-2-carboxy-4-methylthiazol-5(2H)-ylidene]ethyl phosphate + 2 H2O + H(+). It participates in cofactor biosynthesis; thiamine diphosphate biosynthesis. Its function is as follows. Catalyzes the rearrangement of 1-deoxy-D-xylulose 5-phosphate (DXP) to produce the thiazole phosphate moiety of thiamine. Sulfur is provided by the thiocarboxylate moiety of the carrier protein ThiS. In vitro, sulfur can be provided by H(2)S. The polypeptide is Thiazole synthase (Caulobacter vibrioides (strain ATCC 19089 / CIP 103742 / CB 15) (Caulobacter crescentus)).